Reading from the N-terminus, the 170-residue chain is Transcription factor E (170 aa).

Positions 1–93 (MKEAYLYIVE…TWYVDDDVIR (93 aa)) constitute an HTH TFE/IIEalpha-type domain.

It belongs to the TFE family. As to quaternary structure, monomer. Interaction with RNA polymerase subunits RpoF and RpoE is necessary for Tfe stimulatory transcription activity. Able to interact with Tbp and RNA polymerase in the absence of DNA promoter. Interacts both with the preinitiation and elongation complexes.

Transcription factor that plays a role in the activation of archaeal genes transcribed by RNA polymerase. Facilitates transcription initiation by enhancing TATA-box recognition by TATA-box-binding protein (Tbp), and transcription factor B (Tfb) and RNA polymerase recruitment. Not absolutely required for transcription in vitro, but particularly important in cases where Tbp or Tfb function is not optimal. It dynamically alters the nucleic acid-binding properties of RNA polymerases by stabilizing the initiation complex and destabilizing elongation complexes. Seems to translocate with the RNA polymerase following initiation and acts by binding to the non template strand of the transcription bubble in elongation complexes. In Pyrobaculum neutrophilum (strain DSM 2338 / JCM 9278 / NBRC 100436 / V24Sta) (Thermoproteus neutrophilus), this protein is Transcription factor E.